The chain runs to 154 residues: MGLLKAVVVLNGAADVKGVVQFTQEGDGPTTVTGKISGLSPGLHGFHVHALGDTTNGCMSTGPHFNPLGKEHGAPTDDNRHAGDLGNVTVGTDGTVEFSITDSQIPLSGPHSIVGRAVVVHADPDDLGKGGHELSKSTGNAGGRLACGVVGLQG.

3 residues coordinate Cu cation: His-47, His-49, and His-64. Cys-58 and Cys-147 are joined by a disulfide. Zn(2+) contacts are provided by His-64, His-72, His-81, and Asp-84. His-121 is a binding site for Cu cation.

This sequence belongs to the Cu-Zn superoxide dismutase family. As to quaternary structure, homodimer. Requires Cu cation as cofactor. The cofactor is Zn(2+).

It localises to the cytoplasm. It catalyses the reaction 2 superoxide + 2 H(+) = H2O2 + O2. Its function is as follows. Destroys radicals which are normally produced within the cells and which are toxic to biological systems. This chain is Superoxide dismutase [Cu-Zn] (SODCC), found in Pinus sylvestris (Scotch pine).